Reading from the N-terminus, the 420-residue chain is PHO85 cyclin-6 (420 aa).

Disordered stretches follow at residues 1 to 82 (MSIK…ESSF), 134 to 155 (QGTH…DTSN), and 268 to 321 (VTTT…GVQR). Over residues 7-22 (SPSSTNASSSPKSTYS) the composition is skewed to low complexity. Ser61 carries the post-translational modification Phosphoserine. The span at 134–143 (QGTHTVQSST) shows a compositional bias: polar residues. Positions 277 to 296 (AKHESPSNESSLDKANRGAD) are enriched in basic and acidic residues. A phosphoserine mark is found at Ser281 and Ser312. A compositionally biased stretch (acidic residues) spans 307–316 (NENDDSDDEN). Thr317 bears the Phosphothreonine mark.

Belongs to the cyclin family. PHO80 subfamily. In terms of assembly, forms a cyclin-CDK complex with PHO85. Interacts with the substrate protein YJL084C. Interacts with elongin-C, which stabilizes PCL6. Interacts with the CDK inhibitor (CKI) PHO81.

The protein resides in the cytoplasm. It localises to the nucleus. Its function is as follows. Cyclin partner of the cyclin-dependent kinase (CDK) PHO85. Together with cyclin PCL7, controls glycogen phosphorylase and glycogen synthase activities in response to nutrient availablility. The PCL6-PHO85 cyclin-CDK holoenzyme has GLC8 kinase activity and phosphorylates and inactivates the phosphatase PP1-2 inhibitor GLC8, causing activation of PP1-2, which then dephosphorylates and activates glycogen phosphorylase. PCL6-PHO85 also phosphorylates YJL084C. The polypeptide is PHO85 cyclin-6 (PCL6) (Saccharomyces cerevisiae (strain ATCC 204508 / S288c) (Baker's yeast)).